We begin with the raw amino-acid sequence, 256 residues long: Flap endonuclease Xni (256 aa).

Aspartate 105 provides a ligand contact to Mg(2+). The region spanning 164–250 (SQFIDFLAMA…LNTRLANFRV (87 aa)) is the 5'-3' exonuclease domain. 5 residues coordinate K(+): methionine 172, alanine 173, proline 181, isoleucine 183, and isoleucine 186. The tract at residues 185–190 (GIGPKS) is interaction with DNA.

It belongs to the Xni family. The cofactor is Mg(2+). K(+) is required as a cofactor.

In terms of biological role, has flap endonuclease activity. During DNA replication, flap endonucleases cleave the 5'-overhanging flap structure that is generated by displacement synthesis when DNA polymerase encounters the 5'-end of a downstream Okazaki fragment. This chain is Flap endonuclease Xni, found in Shewanella loihica (strain ATCC BAA-1088 / PV-4).